Here is a 590-residue protein sequence, read N- to C-terminus: Aspartate--tRNA(Asp/Asn) ligase (590 aa).

L-aspartate is bound at residue Glu-175. The interval 199–202 (QQYK) is aspartate. L-aspartate contacts are provided by Arg-221 and His-450. 221 to 223 (RDE) contacts ATP. Residue Glu-484 participates in ATP binding. Position 491 (Arg-491) interacts with L-aspartate. 536–539 (GVDR) contacts ATP.

It belongs to the class-II aminoacyl-tRNA synthetase family. Type 1 subfamily. Homodimer.

The protein localises to the cytoplasm. It catalyses the reaction tRNA(Asx) + L-aspartate + ATP = L-aspartyl-tRNA(Asx) + AMP + diphosphate. Functionally, aspartyl-tRNA synthetase with relaxed tRNA specificity since it is able to aspartylate not only its cognate tRNA(Asp) but also tRNA(Asn). Reaction proceeds in two steps: L-aspartate is first activated by ATP to form Asp-AMP and then transferred to the acceptor end of tRNA(Asp/Asn). The polypeptide is Aspartate--tRNA(Asp/Asn) ligase (Nitrobacter winogradskyi (strain ATCC 25391 / DSM 10237 / CIP 104748 / NCIMB 11846 / Nb-255)).